The primary structure comprises 941 residues: Protein BREAST CANCER SUSCEPTIBILITY 1 homolog (941 aa).

The RING-type zinc finger occupies 16 to 54 (CPICLSLYNSAVSLSCNHVFCNACIVKSMKMDATCPVCK). Disordered stretches follow at residues 87-282 (FVSQ…ILPS) and 303-528 (KVKV…GKDD). Composition is skewed to basic and acidic residues over residues 96 to 115 (SDKE…DKNR) and 125 to 136 (KRNEYGKTKEID). Residues 157-173 (LLQNLSAESLTKPTESV) are compositionally biased toward polar residues. Positions 175–196 (TAEKPKDYTENTVIRLDEHPSL) are enriched in basic and acidic residues. Residues 216-236 (NSSQRTESDQLLGTTPVNVPS) show a composition bias toward polar residues. A compositionally biased stretch (basic and acidic residues) spans 242-255 (DSDHESPSKEDEQQ). The Nuclear localization signal 1 signature appears at 298–305 (QKKLPKVK). Polar residues-rich tracts occupy residues 329–357 (GVSQ…SGTI) and 376–391 (SKAQ…NVSN). Composition is skewed to basic and acidic residues over residues 428-453 (GKGD…EKPS) and 477-487 (KTSEKKLKLDS). The short motif at 444–451 (EKRSPTEK) is the Nuclear localization signal 2 element. Residues 489–498 (MISSKATQPH) show a composition bias toward polar residues. The segment covering 512–528 (DKQDSRNNRKSTVGKDD) has biased composition (basic and acidic residues). The C2HC pre-PHD-type zinc finger occupies 561–612 (KFTCAFCQCSEDTEASGEMTHYYRGEPVSADFNGGSKVIHVHKNCAEWAPNV). The PHD-type; degenerate zinc finger occupies 632–681 (ISCSCCGLKGAALGCYNKSCKNSFHVTCAKLIPECRWDNVKFVMLCPLDA). 2 BRCT domains span residues 724 to 819 (KQFH…PYEI) and 840 to 941 (KKPK…LVLI).

In terms of assembly, forms heterodimer with BARD1/ROW1. As to expression, expressed ubiquitously with highest levels in flower buds. Mostly expressed in flowers and siliques, and, to a lower extent, in roots, rosette leaves, inflorescence and young cauline leaves.

The protein resides in the nucleus. Functionally, plays a role in DNA repair and in cell-cycle control. Required for the repair of DNA double-strand breaks (DSBs), both natural and induced by genotoxic stress, by homologous recombination (HR). The protein is Protein BREAST CANCER SUSCEPTIBILITY 1 homolog of Arabidopsis thaliana (Mouse-ear cress).